Reading from the N-terminus, the 534-residue chain is Probable alanine aminotransferase, mitochondrial (534 aa).

A mitochondrion-targeting transit peptide spans 1-18 (MFKRSLKVLLSNPPINRV). Residue K352 is modified to N6-(pyridoxal phosphate)lysine.

It belongs to the class-I pyridoxal-phosphate-dependent aminotransferase family. Alanine aminotransferase subfamily. Homodimer. It depends on pyridoxal 5'-phosphate as a cofactor.

The protein resides in the mitochondrion matrix. The catalysed reaction is L-alanine + 2-oxoglutarate = pyruvate + L-glutamate. The protein operates within amino-acid degradation; L-alanine degradation via transaminase pathway; pyruvate from L-alanine: step 1/1. This chain is Probable alanine aminotransferase, mitochondrial (gpt), found in Dictyostelium discoideum (Social amoeba).